Reading from the N-terminus, the 273-residue chain is 4-hydroxy-tetrahydrodipicolinate reductase (273 aa).

NAD(+) is bound by residues 11–16 (GATGKM) and 106–108 (GTT). The active-site Proton donor/acceptor is the His-162. His-163 provides a ligand contact to (S)-2,3,4,5-tetrahydrodipicolinate. The active-site Proton donor is Lys-166. 172–173 (GT) lines the (S)-2,3,4,5-tetrahydrodipicolinate pocket.

This sequence belongs to the DapB family.

It is found in the cytoplasm. The catalysed reaction is (S)-2,3,4,5-tetrahydrodipicolinate + NAD(+) + H2O = (2S,4S)-4-hydroxy-2,3,4,5-tetrahydrodipicolinate + NADH + H(+). It carries out the reaction (S)-2,3,4,5-tetrahydrodipicolinate + NADP(+) + H2O = (2S,4S)-4-hydroxy-2,3,4,5-tetrahydrodipicolinate + NADPH + H(+). It functions in the pathway amino-acid biosynthesis; L-lysine biosynthesis via DAP pathway; (S)-tetrahydrodipicolinate from L-aspartate: step 4/4. Catalyzes the conversion of 4-hydroxy-tetrahydrodipicolinate (HTPA) to tetrahydrodipicolinate. The chain is 4-hydroxy-tetrahydrodipicolinate reductase from Synechococcus elongatus (strain ATCC 33912 / PCC 7942 / FACHB-805) (Anacystis nidulans R2).